Consider the following 624-residue polypeptide: D-3-phosphoglycerate dehydrogenase 2, chloroplastic (624 aa).

The transit peptide at Met1–Ser49 directs the protein to the chloroplast. Phosphoserine is present on Ser71. Residues Lys231–Val232, Asp251, Val310–Arg312, and Asp336 each bind NAD(+). Arg312 is an active-site residue. The active site involves Glu341. The active-site Proton donor is His360. His360 to Ala363 provides a ligand contact to NAD(+). The ACT domain occupies Leu552–Leu624.

It belongs to the D-isomer specific 2-hydroxyacid dehydrogenase family. As to expression, ubiquitous, but highly expressed in roots and in dark-grown leaf tissues. Expressed in the vasculature, stigma, anther filaments and shoot apical meristem. Not detected in the root meristem or in embryo.

The protein resides in the plastid. The protein localises to the chloroplast. The catalysed reaction is (2R)-3-phosphoglycerate + NAD(+) = 3-phosphooxypyruvate + NADH + H(+). The protein operates within amino-acid biosynthesis; L-serine biosynthesis; L-serine from 3-phospho-D-glycerate: step 1/3. Inhibited by 90 uM 3-phosphonooxypyruvate, but not by Ser, Thr, Val, Gly Trp, O-acetyl-L-Ser and Cys. In terms of biological role, involved in the plastidial phosphorylated pathway of serine biosynthesis (PPSB). The sequence is that of D-3-phosphoglycerate dehydrogenase 2, chloroplastic (PGDH2) from Arabidopsis thaliana (Mouse-ear cress).